Reading from the N-terminus, the 420-residue chain is UDP-glucuronic acid decarboxylase 1 (420 aa).

Methionine 1 bears the N-acetylmethionine mark. Over 1–19 (MVSKGLLRLVSSVNRRKMK) the chain is Cytoplasmic. A helical; Signal-anchor for type II membrane protein transmembrane segment spans residues 20–40 (LLLGIALFAYAASVWGNFVNM). The Lumenal portion of the chain corresponds to 41-420 (RSIQENGELK…RVKKGRTRHS (380 aa)). The residue at position 94 (threonine 94) is a Phosphothreonine. Residues glycine 98, phenylalanine 99, valine 100, aspartate 119, asparagine 120, phenylalanine 122, threonine 123, glycine 124, aspartate 144, and valine 145 each contribute to the NAD(+) site. Residues leucine 149 and tyrosine 150 each coordinate UDP-alpha-D-glucuronate. Leucine 159 and serine 161 together coordinate NAD(+). Residue lysine 177 participates in UDP-alpha-D-glucuronate binding. Threonine 178 serves as a coordination point for NAD(+). UDP-alpha-D-glucuronate contacts are provided by asparagine 185, glycine 188, lysine 191, and arginine 192. NAD(+)-binding residues include alanine 200, tyrosine 231, and lysine 235. Tyrosine 231 (proton acceptor) is an active-site residue. 3 residues coordinate UDP-alpha-D-glucuronate: tyrosine 245, glutamine 248, and glutamate 249. NAD(+) contacts are provided by threonine 261, histidine 267, and arginine 272. Asparagine 316 carries N-linked (GlcNAc...) asparagine glycosylation.

The protein belongs to the NAD(P)-dependent epimerase/dehydratase family. UDP-glucuronic acid decarboxylase subfamily. In terms of assembly, homodimer and homotetramer. Interacts with AKT1. It depends on NAD(+) as a cofactor. In terms of tissue distribution, ubiquitous. Detected in heart, brain, spleen, lung, testis, liver, skeletal muscle and kidney.

It localises to the golgi apparatus. It is found in the golgi stack membrane. The catalysed reaction is UDP-alpha-D-glucuronate + H(+) = UDP-alpha-D-xylose + CO2. The protein operates within nucleotide-sugar biosynthesis; UDP-alpha-D-xylose biosynthesis; UDP-alpha-D-xylose from UDP-alpha-D-glucuronate: step 1/1. Catalyzes the NAD-dependent decarboxylation of UDP-glucuronic acid to UDP-xylose. Necessary for the biosynthesis of the core tetrasaccharide in glycosaminoglycan biosynthesis. This chain is UDP-glucuronic acid decarboxylase 1, found in Rattus norvegicus (Rat).